The sequence spans 216 residues: Adenylate kinase (216 aa).

10–15 is an ATP binding site; it reads GAGKGT. Residues 30–59 are NMP; the sequence is STGDIFRYNIKQGTELGKKAKSYMDQGLLV. AMP contacts are provided by residues Thr-31, Arg-36, 57–59, 85–88, and Gln-92; these read LLV and GFPR. The interval 126–163 is LID; it reads GRRICRECGATFHVQYNPSTKGALCDQCGGELYQRDDD. Arg-127 lines the ATP pocket. Positions 130 and 133 each coordinate Zn(2+). ATP is bound at residue 136–137; that stretch reads TF. Zn(2+) is bound by residues Cys-150 and Cys-153. Residues Arg-160 and Arg-171 each coordinate AMP. Residue Lys-199 participates in ATP binding.

Belongs to the adenylate kinase family. In terms of assembly, monomer.

It localises to the cytoplasm. It catalyses the reaction AMP + ATP = 2 ADP. Its pathway is purine metabolism; AMP biosynthesis via salvage pathway; AMP from ADP: step 1/1. In terms of biological role, catalyzes the reversible transfer of the terminal phosphate group between ATP and AMP. Plays an important role in cellular energy homeostasis and in adenine nucleotide metabolism. The sequence is that of Adenylate kinase from Alkaliphilus oremlandii (strain OhILAs) (Clostridium oremlandii (strain OhILAs)).